A 140-amino-acid polypeptide reads, in one-letter code: Large ribosomal subunit protein uL16c (140 aa).

The protein belongs to the universal ribosomal protein uL16 family. As to quaternary structure, part of the 50S ribosomal subunit.

Its subcellular location is the plastid. The protein localises to the chloroplast. This Cyanidium caldarium (Red alga) protein is Large ribosomal subunit protein uL16c.